The sequence spans 503 residues: Probable cytosol aminopeptidase (503 aa).

Residues K270 and D275 each contribute to the Mn(2+) site. K282 is an active-site residue. 3 residues coordinate Mn(2+): D293, D352, and E354. Residue R356 is part of the active site.

It belongs to the peptidase M17 family. Mn(2+) is required as a cofactor.

Its subcellular location is the cytoplasm. The catalysed reaction is Release of an N-terminal amino acid, Xaa-|-Yaa-, in which Xaa is preferably Leu, but may be other amino acids including Pro although not Arg or Lys, and Yaa may be Pro. Amino acid amides and methyl esters are also readily hydrolyzed, but rates on arylamides are exceedingly low.. It carries out the reaction Release of an N-terminal amino acid, preferentially leucine, but not glutamic or aspartic acids.. Functionally, presumably involved in the processing and regular turnover of intracellular proteins. Catalyzes the removal of unsubstituted N-terminal amino acids from various peptides. The protein is Probable cytosol aminopeptidase of Edwardsiella ictaluri (strain 93-146).